The primary structure comprises 150 residues: Snaclec rhinocetin subunit beta (150 aa).

The signal sequence occupies residues 1-23 (MGRFIFLSSGLLVVFLSLSGTGA). Disulfide bonds link cysteine 27/cysteine 38, cysteine 55/cysteine 144, and cysteine 121/cysteine 136. The 112-residue stretch at 34-145 (YEGYCYKVFK…CNRQQYFVCK (112 aa)) folds into the C-type lectin domain.

The protein belongs to the snaclec family. In terms of assembly, heterodimer; disulfide-linked. Expressed by the venom gland.

The protein resides in the secreted. Antagonist of the alpha-2 subunit of the integrin alpha-2/beta-1 (ITGA2/ITGB1) on human platelets and endothelial cells. This protein inhibits collagen-stimulated activation of human platelets in a dose-dependent manner. In addition, it antagonizes the binding of monoclonal antibodies against the alpha-2 subunit of integrin alpha-2/beta-1 to platelets and it coimmunoprecipitates with this integrin. The protein is Snaclec rhinocetin subunit beta of Bitis rhinoceros (West African gaboon viper).